Here is a 174-residue protein sequence, read N- to C-terminus: ATP-dependent protease subunit HslV (174 aa).

Threonine 2 is an active-site residue. Na(+) contacts are provided by glycine 157, cysteine 160, and threonine 163.

This sequence belongs to the peptidase T1B family. HslV subfamily. A double ring-shaped homohexamer of HslV is capped on each side by a ring-shaped HslU homohexamer. The assembly of the HslU/HslV complex is dependent on binding of ATP.

Its subcellular location is the cytoplasm. It carries out the reaction ATP-dependent cleavage of peptide bonds with broad specificity.. Allosterically activated by HslU binding. Functionally, protease subunit of a proteasome-like degradation complex believed to be a general protein degrading machinery. The sequence is that of ATP-dependent protease subunit HslV from Cellvibrio japonicus (strain Ueda107) (Pseudomonas fluorescens subsp. cellulosa).